Reading from the N-terminus, the 303-residue chain is Regulatory protein PocR (303 aa).

The 99-residue stretch at 195–293 (KKALRYIDAH…QVTPQAYRQQ (99 aa)) folds into the HTH araC/xylS-type domain. 2 consecutive DNA-binding regions (H-T-H motif) follow at residues 212-233 (EDVA…KKYQ) and 260-283 (IASI…RQTY).

It functions in the pathway cofactor biosynthesis; adenosylcobalamin biosynthesis [regulation]. It participates in polyol metabolism; 1,2-propanediol degradation [regulation]. Positive regulatory protein of pdu and cob operons. Positively autoregulates its own expression. This is Regulatory protein PocR (pocR) from Salmonella typhimurium (strain LT2 / SGSC1412 / ATCC 700720).